We begin with the raw amino-acid sequence, 79 residues long: Ixosin (79 aa).

The propeptide at 1–56 (MSAHKVQIGLSSGQFRVALQVPSVRLKGLGSFHTGSIVLPSQGSLREDQISLHNQD) is removed in mature form.

Functionally, has antifungal activity against C.albicans. Has antibacterial activity against the Gram-positive bacterium S.aureus and the Gram-negative bacterium E.coli. Lacks hemolytic activity against rabbit erythrocytes. The chain is Ixosin from Ixodes sinensis (Hard tick).